Reading from the N-terminus, the 155-residue chain is Ribosome maturation factor RimP (155 aa).

Belongs to the RimP family.

Its subcellular location is the cytoplasm. In terms of biological role, required for maturation of 30S ribosomal subunits. This Listeria monocytogenes serotype 4a (strain HCC23) protein is Ribosome maturation factor RimP.